A 459-amino-acid chain; its full sequence is tRNA modification GTPase MnmE (459 aa).

(6S)-5-formyl-5,6,7,8-tetrahydrofolate contacts are provided by Arg-20, Glu-85, and Arg-124. Residues 221–380 (GLSTVIIGRP…LEEAIQSLFY (160 aa)) form the TrmE-type G domain. Residue Asn-231 coordinates K(+). Residues 231 to 236 (NVGKSS), 250 to 256 (TDIPGTT), and 275 to 278 (DTAG) contribute to the GTP site. Ser-235 lines the Mg(2+) pocket. Residues Thr-250, Ile-252, and Thr-255 each contribute to the K(+) site. Thr-256 is a binding site for Mg(2+). Lys-459 is a (6S)-5-formyl-5,6,7,8-tetrahydrofolate binding site.

Belongs to the TRAFAC class TrmE-Era-EngA-EngB-Septin-like GTPase superfamily. TrmE GTPase family. In terms of assembly, homodimer. Heterotetramer of two MnmE and two MnmG subunits. K(+) is required as a cofactor.

The protein localises to the cytoplasm. In terms of biological role, exhibits a very high intrinsic GTPase hydrolysis rate. Involved in the addition of a carboxymethylaminomethyl (cmnm) group at the wobble position (U34) of certain tRNAs, forming tRNA-cmnm(5)s(2)U34. In Bacillus velezensis (strain DSM 23117 / BGSC 10A6 / LMG 26770 / FZB42) (Bacillus amyloliquefaciens subsp. plantarum), this protein is tRNA modification GTPase MnmE.